A 537-amino-acid polypeptide reads, in one-letter code: Beta-1-syntrophin (537 aa).

Alanine 2 is subject to N-acetylalanine. PH domains are found at residues 18–297 (RAQR…SNAG) and 321–432 (EIRH…QGCH). A phosphoserine mark is found at serine 86, serine 125, and serine 204. A PDZ domain is found at 111 to 194 (GVKVLKQELG…EVLLEVKYMR (84 aa)). The interval 204 to 233 (SPVSEIGWETPPPESPRLGGGSAEPLSSQS) is disordered. A Phosphothreonine modification is found at threonine 213. Phosphoserine occurs at positions 218, 225, 231, 235, and 388. One can recognise an SU domain in the interval 481 to 537 (PYEKLKMSSDDGIRMLYLDFGGKEGEIQLDLHSCPKPIVFIIHSFLSAKITRLGLVA). Positions 517 to 537 (PIVFIIHSFLSAKITRLGLVA) are calmodulin-binding.

Belongs to the syntrophin family. In terms of assembly, monomer and homodimer. Interacts with the viral HTLV-1 TAX protein and other members of the syntrophin family: SNTA1 and SNTB2. Interacts with the dystrophin protein DMD and related proteins DTNA and UTRN and with the sodium channel proteins SCN4A and SCN5A. Interacts with DTNB. Post-translationally, phosphorylated by CaM-kinase II. As to expression, ubiquitous. Expressed at high levels in the liver.

The protein resides in the cell membrane. It localises to the sarcolemma. The protein localises to the cell junction. It is found in the cytoplasm. Its subcellular location is the cytoskeleton. In terms of biological role, adapter protein that binds to and probably organizes the subcellular localization of a variety of membrane proteins. May link various receptors to the actin cytoskeleton and the dystrophin glycoprotein complex. The chain is Beta-1-syntrophin (Sntb1) from Mus musculus (Mouse).